The sequence spans 132 residues: Small ribosomal subunit protein uS8 (132 aa).

It belongs to the universal ribosomal protein uS8 family. As to quaternary structure, part of the 30S ribosomal subunit. Contacts proteins S5 and S12.

Its function is as follows. One of the primary rRNA binding proteins, it binds directly to 16S rRNA central domain where it helps coordinate assembly of the platform of the 30S subunit. The polypeptide is Small ribosomal subunit protein uS8 (Corynebacterium efficiens (strain DSM 44549 / YS-314 / AJ 12310 / JCM 11189 / NBRC 100395)).